The sequence spans 1512 residues: ATP-dependent permease YOR1 (1512 aa).

The disordered stretch occupies residues 1-68 (MSPLLPTHWG…KGMKETEDGG (68 aa)). Over residues 13–29 (APQNEPTLPSPSHSVST) the composition is skewed to polar residues. Positions 31–65 (VGDEEKLRRSEGSDGEDRINLDSNKYDVKGMKETE) are enriched in basic and acidic residues. The next 5 membrane-spanning stretches (helical) occupy residues 229 to 249 (ASLAMSLLDVFGWFFMSAGFI), 288 to 308 (GPGIGAAIGLLLLLICSSLGM), 363 to 385 (FAAGFSHMLWTAPVQMIVIIIIL), 475 to 495 (GMTAIAMSLPILAAILSFITY), and 507 to 527 (IFTVITLFNLMRMPLMMWPMT). In terms of domain architecture, ABC transmembrane type-1 1 spans 246-533 (AGFIKVFGDT…WPMTLSSTAD (288 aa)). Residues 594–656 (VLNGGKPGGP…SAPGIDEEIS (63 aa)) form a disordered region. The segment covering 619 to 643 (AEEIQAETAAGQPGAGEASAEGQGQ) has biased composition (low complexity). One can recognise an ABC transporter 1 domain in the interval 651–871 (IDEEISEKKE…NGAFAKLIKE (221 aa)). ATP is bound at residue 683 to 690 (GAIGSGKS). 4 helical membrane-spanning segments follow: residues 937 to 957 (GVFMLPLLFFCIVVAQSFYVI), 974 to 994 (NGFYMGIYAGLGVGLAIALFF), 1067 to 1087 (VILLAIIEPYFLIAMAVVSLL), and 1167 to 1187 (FLGSLLSFSVAIIVVCSSSVS). An ABC transmembrane type-1 2 domain is found at 943 to 1217 (LLFFCIVVAQ…LVRQIAEVEN (275 aa)). The ABC transporter 2 domain maps to 1255–1496 (IEFKDVRMRY…GGIFTEMCSK (242 aa)). Residue 1289–1296 (GRTGAGKS) participates in ATP binding.

This sequence belongs to the ABC transporter superfamily. ABCC family. Conjugate transporter (TC 3.A.1.208) subfamily.

The protein resides in the extracellular vesicle membrane. It is found in the secreted. Functionally, transmembrane transporter. May play a role in the packaging or formation of extracellular vesicles (EVs), and in the export of virulence factors from EVs. Required for efficient non-lytic exocytosis from host macrophages, the process by which the yeast escapes host macrophages with both host cell and pathogen remaining viable. The chain is ATP-dependent permease YOR1 from Cryptococcus neoformans var. grubii serotype A (strain H99 / ATCC 208821 / CBS 10515 / FGSC 9487) (Filobasidiella neoformans var. grubii).